The chain runs to 250 residues: Probable syntaxin-8B (250 aa).

Over 1–213 (MGDYWLNEHD…NRRMETIKQN (213 aa)) the chain is Cytoplasmic. A coiled-coil region spans residues 73–100 (EKELLRRKNKVESLISMKNQLNSTLDAA). The 63-residue stretch at 148–210 (QHIMREQDES…RNANRRMETI (63 aa)) folds into the t-SNARE coiled-coil homology domain. The chain crosses the membrane as a helical; Anchor for type IV membrane protein span at residues 214 to 234 (AGSTCMIVCIVILIILIVVLI). The Vesicular segment spans residues 235–250 (ATDSGCKIYNDPKHCP).

The protein belongs to the syntaxin family.

Its subcellular location is the membrane. In Dictyostelium discoideum (Social amoeba), this protein is Probable syntaxin-8B (syn8B).